We begin with the raw amino-acid sequence, 518 residues long: Adenine deaminase (518 aa).

This sequence belongs to the metallo-dependent hydrolases superfamily. Adenine deaminase family. Mn(2+) is required as a cofactor.

The catalysed reaction is adenine + H2O + H(+) = hypoxanthine + NH4(+). The chain is Adenine deaminase from Methanoculleus marisnigri (strain ATCC 35101 / DSM 1498 / JR1).